Consider the following 398-residue polypeptide: 1-deoxy-D-xylulose 5-phosphate reductoisomerase (398 aa).

Residues T11, G12, S13, I14, R38, N39, and N125 each coordinate NADPH. A 1-deoxy-D-xylulose 5-phosphate-binding site is contributed by K126. E127 provides a ligand contact to NADPH. D151 contributes to the Mn(2+) binding site. Residues S152, E153, S179, and H202 each contribute to the 1-deoxy-D-xylulose 5-phosphate site. Mn(2+) is bound at residue E153. Residue G208 coordinates NADPH. 4 residues coordinate 1-deoxy-D-xylulose 5-phosphate: S215, N220, K221, and E224. Mn(2+) is bound at residue E224.

Belongs to the DXR family. Requires Mg(2+) as cofactor. It depends on Mn(2+) as a cofactor.

The catalysed reaction is 2-C-methyl-D-erythritol 4-phosphate + NADP(+) = 1-deoxy-D-xylulose 5-phosphate + NADPH + H(+). It participates in isoprenoid biosynthesis; isopentenyl diphosphate biosynthesis via DXP pathway; isopentenyl diphosphate from 1-deoxy-D-xylulose 5-phosphate: step 1/6. In terms of biological role, catalyzes the NADPH-dependent rearrangement and reduction of 1-deoxy-D-xylulose-5-phosphate (DXP) to 2-C-methyl-D-erythritol 4-phosphate (MEP). The chain is 1-deoxy-D-xylulose 5-phosphate reductoisomerase from Burkholderia cenocepacia (strain HI2424).